We begin with the raw amino-acid sequence, 186 residues long: Peptide deformylase (186 aa).

Fe cation-binding residues include cysteine 99 and histidine 141. The active site involves glutamate 142. A Fe cation-binding site is contributed by histidine 145.

It belongs to the polypeptide deformylase family. Fe(2+) serves as cofactor.

It carries out the reaction N-terminal N-formyl-L-methionyl-[peptide] + H2O = N-terminal L-methionyl-[peptide] + formate. Its function is as follows. Removes the formyl group from the N-terminal Met of newly synthesized proteins. Requires at least a dipeptide for an efficient rate of reaction. N-terminal L-methionine is a prerequisite for activity but the enzyme has broad specificity at other positions. This is Peptide deformylase from Chlamydia pneumoniae (Chlamydophila pneumoniae).